A 924-amino-acid chain; its full sequence is Hexokinase-3 (924 aa).

Positions 1–27 (MAAIEPSGLHPGERDSSCPQEGIPRPS) are disordered. 2 consecutive Hexokinase domains span residues 27–471 (SGSL…MVTA) and 477–913 (ATHR…LVTR). A hexokinase small subdomain 1 region spans residues 84–220 (HGTEQGDFLV…TYNIDVVAMV (137 aa)). 95–102 (ELGATGAS) serves as a coordination point for ATP. D-glucose 6-phosphate is bound at residue 95–104 (ELGATGASLR). D-glucose is bound by residues serine 168, 185–186 (TK), and 221–222 (ND). Residues 221–460 (NDTVGTMMGC…CDVSFIPSVD (240 aa)) form a hexokinase large subdomain 1 region. Residues aspartate 222 and threonine 245 each contribute to the D-glucose 6-phosphate site. Residues asparagine 248, glutamate 273, and 304 to 307 (QRFE) contribute to the D-glucose site. A D-glucose 6-phosphate-binding site is contributed by 426 to 428 (GGR). Residues 438 to 439 (CI) and 542 to 547 (DLGGTN) each bind ATP. The hexokinase small subdomain 2 stretch occupies residues 531–662 (DGSERGDFLA…AVELNVVAIV (132 aa)). A D-glucose 6-phosphate-binding site is contributed by 542–546 (DLGGT). Residues 610-611 (SF), 627-628 (TK), and 663-664 (ND) contribute to the D-glucose site. The segment at 663-902 (NDTVGTMMSC…CTVTFLQSED (240 aa)) is hexokinase large subdomain 2. Aspartate 664 and threonine 687 together coordinate D-glucose 6-phosphate. Threonine 687 is a binding site for ATP. D-glucose contacts are provided by residues 689–690 (TN), glutamate 715, and glutamate 749. Residues 754 to 755 (GM), 791 to 795 (TKFLS), and 870 to 874 (TLYKL) each bind ATP. Residues 868-870 (DGT) and serine 904 each bind D-glucose 6-phosphate.

This sequence belongs to the hexokinase family.

It carries out the reaction a D-hexose + ATP = a D-hexose 6-phosphate + ADP + H(+). It catalyses the reaction D-fructose + ATP = D-fructose 6-phosphate + ADP + H(+). The enzyme catalyses D-glucose + ATP = D-glucose 6-phosphate + ADP + H(+). Its pathway is carbohydrate metabolism; hexose metabolism. It participates in carbohydrate degradation; glycolysis; D-glyceraldehyde 3-phosphate and glycerone phosphate from D-glucose: step 1/4. Its activity is regulated as follows. Hexokinase is an allosteric enzyme inhibited by its product D-glucose 6-phosphate. In terms of biological role, catalyzes the phosphorylation of hexose, such as D-glucose and D-fructose, to hexose 6-phosphate (D-glucose 6-phosphate and D-fructose 6-phosphate, respectively). Mediates the initial step of glycolysis by catalyzing phosphorylation of D-glucose to D-glucose 6-phosphate. The polypeptide is Hexokinase-3 (Rattus norvegicus (Rat)).